A 184-amino-acid chain; its full sequence is Ras-related protein Rap-1b (184 aa).

10–18 (GSGGVGKSA) is a binding site for GTP. Residues 25–67 (QGIFVEKYDPTIEDSYRKQVEVDAQQCMLEILDTAGTEQFTAM) are interaction with KRIT1. Positions 32-40 (YDPTIEDSY) match the Effector region motif. Ser-39 is subject to ADP-ribosylserine; by botulinum toxin. GTP contacts are provided by residues 57 to 61 (DTAGT), 116 to 119 (NKCD), and 147 to 149 (SAK). Ser-179 is subject to Phosphoserine; by PKA. At Cys-181 the chain carries Cysteine methyl ester. A lipid anchor (S-geranylgeranyl cysteine) is attached at Cys-181. The propeptide at 182 to 184 (QLL) is removed in mature form.

The protein belongs to the small GTPase superfamily. Ras family. Heterodimer with RAP1GAP. Interacts with EPAC2. Interacts with SGSM1. Interacts with SGSM2. Interacts with SGSM3. Interacts with KRIT1. Interacts with RAP1GDS1.

Its subcellular location is the cell membrane. The protein localises to the cytoplasm. It localises to the cytosol. The protein resides in the cell junction. It carries out the reaction GTP + H2O = GDP + phosphate + H(+). With respect to regulation, activated by guanine nucleotide-exchange factor (GEF) EPAC2 in a cAMP-dependent manner. Functionally, GTP-binding protein that possesses intrinsic GTPase activity. Contributes to the polarizing activity of KRIT1 and CDH5 in the establishment and maintenance of correct endothelial cell polarity and vascular lumen. Required for the localization of phosphorylated PRKCZ, PARD3 and TIAM1 to the cell junction. Plays a role in the establishment of basal endothelial barrier function. This chain is Ras-related protein Rap-1b (Rap1b), found in Rattus norvegicus (Rat).